The sequence spans 445 residues: Phosphoglucosamine mutase (445 aa).

Serine 102 serves as the catalytic Phosphoserine intermediate. Mg(2+) is bound by residues serine 102, aspartate 241, aspartate 243, and aspartate 245. Serine 102 is modified (phosphoserine).

Belongs to the phosphohexose mutase family. The cofactor is Mg(2+). Activated by phosphorylation.

The enzyme catalyses alpha-D-glucosamine 1-phosphate = D-glucosamine 6-phosphate. In terms of biological role, catalyzes the conversion of glucosamine-6-phosphate to glucosamine-1-phosphate. The polypeptide is Phosphoglucosamine mutase (Rhodococcus jostii (strain RHA1)).